The following is a 177-amino-acid chain: Ribosome maturation factor RimM (177 aa).

A PRC barrel domain is found at 98–177 (DDGYYWKDLM…TIEVDWDPGF (80 aa)).

It belongs to the RimM family. As to quaternary structure, binds ribosomal protein uS19.

The protein resides in the cytoplasm. Functionally, an accessory protein needed during the final step in the assembly of 30S ribosomal subunit, possibly for assembly of the head region. Essential for efficient processing of 16S rRNA. May be needed both before and after RbfA during the maturation of 16S rRNA. It has affinity for free ribosomal 30S subunits but not for 70S ribosomes. In Enterobacter sp. (strain 638), this protein is Ribosome maturation factor RimM.